The sequence spans 573 residues: AP-4 complex accessory subunit Tepsin (573 aa).

Positions 8–141 (RDRLSFLHRL…FSDAVPQPPS (134 aa)) constitute an ENTH domain. Disordered stretches follow at residues 136 to 155 (VPQP…MGAQ) and 194 to 311 (NAVR…NDCQ). The span at 137–150 (PQPPSQPPQIPPPA) shows a compositional bias: pro residues. A compositionally biased stretch (polar residues) spans 217-229 (PAVTPSASHTHPN). Residues 260–293 (SSPSSQNSSCTSNLSRASDSGSRSGSDSHSGTSR) show a composition bias toward low complexity. Positions 294 to 303 (EPGDLAERAE) are enriched in basic and acidic residues. Position 400 is a phosphoserine (Ser-400). The segment at 497–526 (CSSEQGTESEQRLENTDTPEDSSSPLPWSP) is disordered. Residues 526–536 (PNSLFAGMELV) are interaction with AP4B1. The interval 563-573 (SEPSAFAFLNM) is interaction with AP4E1.

As to quaternary structure, interacts with AP4B1 and AP4E1; the interaction is direct and mediates the association of TEPSIN with the adapter-like complex 4 (AP-4), a heterotetramer composed of AP4B1, AP4E1, AP4M1 and AP4S1.

It localises to the golgi apparatus. The protein localises to the trans-Golgi network membrane. The protein resides in the cytoplasmic vesicle. Its subcellular location is the cytoplasm. It is found in the cytosol. Associates with the adapter-like complex 4 (AP-4) and may therefore play a role in vesicular trafficking of proteins at the trans-Golgi network. This is AP-4 complex accessory subunit Tepsin from Mus musculus (Mouse).